Here is a 326-residue protein sequence, read N- to C-terminus: Target of rapamycin complex subunit LST8 (326 aa).

Residue M1 is modified to N-acetylmethionine. 5 WD repeats span residues 1–37 (MNTT…CTRT), 40–80 (HQDS…PIIS), 83–122 (GVSK…LQCQ), 126–165 (QVNA…NEQL), and 168–207 (EPEF…GDEV). T51 bears the Phosphothreonine mark. K86 participates in a covalent cross-link: Glycyl lysine isopeptide (Lys-Gly) (interchain with G-Cter in SUMO3). Residues K215, K245, and K261 each participate in a glycyl lysine isopeptide (Lys-Gly) (interchain with G-Cter in SUMO3) cross-link. The WD 6 repeat unit spans residues 218-257 (AHTRYALQCRFSPDSTLLATCSADQTCKIWRTSNFSLMTE). The stretch at 268–309 (SSRGWMWGCAFSGDSQYIVTASSDNLARLWCVETGEIKREYG) is one WD 7 repeat. A Glycyl lysine isopeptide (Lys-Gly) (interchain with G-Cter in SUMO3); alternate cross-link involves residue K305. Glycyl lysine isopeptide (Lys-Gly) (interchain with G-Cter in ubiquitin); alternate cross-links involve residues K305 and K313. K313 is covalently cross-linked (Glycyl lysine isopeptide (Lys-Gly) (interchain with G-Cter in SUMO1); alternate).

The protein belongs to the WD repeat LST8 family. In terms of assembly, part of the mechanistic target of rapamycin complex 1 (mTORC1) which contains MTOR, MLST8 and RPTOR. mTORC1 associates with AKT1S1/PRAS40, which inhibits its activity. mTORC1 binds to and is inhibited by FKBP12-rapamycin. Within mTORC1, interacts directly with MTOR and RPTOR. Component of the mechanistic target of rapamycin complex 2 (mTORC2), consisting in two heterotretramers composed of MTOR, MLST8, RICTOR and MAPKAP1/SIN1. Contrary to mTORC1, mTORC2 does not bind to and is not sensitive to FKBP12-rapamycin. mTORC1 and mTORC2 associate with DEPTOR, which regulates their activity. Interacts with RHEB. Interacts with MEAK7. Interacts with SIK3. Interacts with SLC38A7; this interaction promotes the recruitment of mTORC1 to the lysosome and its subsequent activation. Phosphorylation at Thr-51 by CDK1 promotes ubiquitination by the SCF(FBXW7) complex, followed by degradation. Post-translationally, ubiquitination by the SCF(FBXW7) and SCF(FBXW11) complexes following phosphorylation at Thr-51 by CDK1, leads to its degradation by the proteasome. Ubiquitination at Lys-305 and Lys-313 by TRAF2 via 'Lys-63'-linked polyubiquitin chains inhibits formation of the mTORC2 complex, while promoting formation of the mTORC1 complex: ubiquitination disrupts the interaction between MLST8 and MAPKAP1/SIN1 to favor mTORC1 assembly. Deubiquitination at Lys-305 and Lys-313 by OTUD7B promotes MLST8 interaction with MAPKAP1/SIN1, facilitating mTORC2 assembly. In terms of processing, sumoylation with SUMO1, SUMO2 and SUMO3 promotes assembly of both mTORC1 and mTORC2 complexes. As to expression, expressed at highest levels in the brain and testis, followed by lung, heart, kidney, skeletal muscle, spleen and liver. Also expressed in epididymal, abdominal and brown fat, small intestine and pancreas.

It is found in the lysosome membrane. The protein resides in the cytoplasm. Functionally, subunit of both mTORC1 and mTORC2, which regulates cell growth and survival in response to nutrient and hormonal signals. mTORC1 is activated in response to growth factors or amino acids. In response to nutrients, mTORC1 is recruited to the lysosome membrane and promotes protein, lipid and nucleotide synthesis by phosphorylating several substrates, such as ribosomal protein S6 kinase (RPS6KB1 and RPS6KB2) and EIF4EBP1 (4E-BP1). In the same time, it inhibits catabolic pathways by phosphorylating the autophagy initiation components ULK1 and ATG13, as well as transcription factor TFEB, a master regulators of lysosomal biogenesis and autophagy. The mTORC1 complex is inhibited in response to starvation and amino acid depletion. Within mTORC1, MLST8 interacts directly with MTOR and enhances its kinase activity. In nutrient-poor conditions, stabilizes the MTOR-RPTOR interaction and favors RPTOR-mediated inhibition of MTOR activity. As part of the mTORC2 complex, transduces signals from growth factors to pathways involved in proliferation, cytoskeletal organization, lipogenesis and anabolic output. mTORC2 is also activated by growth factors, but seems to be nutrient-insensitive. In response to growth factors, mTORC2 phosphorylates and activates AGC protein kinase family members, including AKT (AKT1, AKT2 and AKT3), PKC (PRKCA, PRKCB and PRKCE) and SGK1. mTORC2 functions upstream of Rho GTPases to regulate the actin cytoskeleton, probably by activating one or more Rho-type guanine nucleotide exchange factors. mTORC2 promotes the serum-induced formation of stress-fibers or F-actin. mTORC2 plays a critical role in AKT1 activation by mediating phosphorylation of different sites depending on the context, such as 'Thr-450', 'Ser-473', 'Ser-477' or 'Thr-479', facilitating the phosphorylation of the activation loop of AKT1 on 'Thr-308' by PDPK1/PDK1 which is a prerequisite for full activation. mTORC2 regulates the phosphorylation of SGK1 at 'Ser-422'. mTORC2 also modulates the phosphorylation of PRKCA on 'Ser-657'. Within mTORC2, MLST8 acts as a bridge between MAPKAP1/SIN1 and MTOR. The protein is Target of rapamycin complex subunit LST8 of Rattus norvegicus (Rat).